A 546-amino-acid polypeptide reads, in one-letter code: Cytochrome P450 monooxygenase fumoB (546 aa).

A helical transmembrane segment spans residues 13–33 (LGYYEKLAGILGIIGLVLLFW). A glycan (N-linked (GlcNAc...) asparagine) is linked at Asn147. A heme-binding site is contributed by Cys488.

It belongs to the cytochrome P450 family. Heme is required as a cofactor.

It is found in the membrane. The protein operates within secondary metabolite biosynthesis. Functionally, cytochrome P450 monooxygenase; part of the gene cluster that mediates the biosynthesis of fumosorinone, a 2-pyridone alkaloid that acts as an inhibitor of protein tyrosine phosphatase 1B which is implicated asa negative regulator of insulin receptor signaling and a potential drug target for the treatment of type II diabetes and other associated metabolic syndromes. The polyketide-amino acid backbone of fumosorinone is first assembled by the PKS-NRPS hybrid fumoS. The PKS modules condense one acetyl-CoA starter unit with 7 malonyl-CoA units, programmed C-methylations occurring after the first 3 and the sixth extensions, and cycles of full reduction occurring after the first 2 extensions. Because fumoS lacks a designated enoyl reductase (ER) domain, the required activity is provided the enoyl reductase fumoC. Upon formation of the polyketide backbone on the thiotemplate, the polyketide is transferred to the NRPS module and linked to tyrosine to produce the acyltetramic acid intermediate called prefumosorinone A. The cytochrome P450 monooxygenase fumoA then probably catalyzes an unprecedented oxidative ring expansion of prefumosorinone A to form prefumosorinone B which contains the 2-pyridone core of fumosorinone. The cytochrome P450 monooxygenase fumoB might hydroxylate the nitrogen of prefumosorinone B, but not the acyltetramic acid prefumosorinone A, to form fumosorinone. The polypeptide is Cytochrome P450 monooxygenase fumoB (Cordyceps fumosorosea (strain ARSEF 2679) (Isaria fumosorosea)).